The following is a 481-amino-acid chain: Cytochrome P450 monooygenase 2 (481 aa).

A helical membrane pass occupies residues 12–32 (GSQLLPFYIAIFVFTLVPWAI). C418 is a heme binding site.

This sequence belongs to the cytochrome P450 family. Heme is required as a cofactor.

The protein localises to the membrane. It functions in the pathway plant hormone biosynthesis; gibberellin biosynthesis. In terms of biological role, gibberellin 20-oxidase; part of the gene cluster that mediates the biosynthesis of gibberellins (GAs), diterpenoids that may provide a selective advantage during infection of the preferred host plant, rice. Gibberellins (GAs) are diterpenoids and are synthesized via the mevalonate pathway. Biosynthesis of the major metabolite GA3 (gibberellic acid) from geranylgeranyl diphosphate (GGPP) requires 13 steps. The GGPP produced by the geranylgeranyl diphosphate synthase GGS2 is converted to ent-kaurene via ent-copalyldiphosphate in a two-step cyclization reaction performed by the bifunctional ent-copalyl diphosphate synthase/ent-kaurene synthase enzyme (CPS/KS). Ent-Kaurene is metabolized to GAs by a series of oxidation reactions catalyzed by cytochrome P450 monooxygenases. Cytochrome P450 monooxygenase P450-4 is an ent-kaurene oxidase that catalyzes the three oxidation steps between ent-kaurene and ent-kaurenoic acid. The highly multifunctional cytochrome P450 monooxygenase P450-1 then catalyzes four steps involving oxidation at two carbon atoms, in the main pathway from ent-kaurenoic acid to GA14 via GA12-aldehyde as well as producing kaurenolides and fujenoic acids as by-products. The cytochrome P450 monooxygenase P450-2 then converts GA14 to GA4 by removal of C-20. GA4 is further converted to GA7 by the GA4 desaturase DES via 1,2-desaturation before cytochrome P450 monooxygenase P450-3, a 13-hydroxylase, hydroxylates GA7 to GA3, the final product of the GA-biosynthetic pathway. The chain is Cytochrome P450 monooygenase 2 from Gibberella fujikuroi (strain CBS 195.34 / IMI 58289 / NRRL A-6831) (Bakanae and foot rot disease fungus).